The primary structure comprises 367 residues: Glutamate 5-kinase (367 aa).

An ATP-binding site is contributed by Lys-17. 3 residues coordinate substrate: Ser-57, Asp-144, and Asn-156. ATP is bound by residues 176-177 and 217-223; these read SD and TGGMTSK. The PUA domain maps to 279 to 357; that stretch reads AGALTLDEGA…SELPGELRRP (79 aa).

The protein belongs to the glutamate 5-kinase family.

Its subcellular location is the cytoplasm. The catalysed reaction is L-glutamate + ATP = L-glutamyl 5-phosphate + ADP. The protein operates within amino-acid biosynthesis; L-proline biosynthesis; L-glutamate 5-semialdehyde from L-glutamate: step 1/2. In terms of biological role, catalyzes the transfer of a phosphate group to glutamate to form L-glutamate 5-phosphate. The chain is Glutamate 5-kinase from Mycolicibacterium paratuberculosis (strain ATCC BAA-968 / K-10) (Mycobacterium paratuberculosis).